Consider the following 326-residue polypeptide: Pyruvate dehydrogenase E1 component subunit beta (326 aa).

Glutamate 60 is a binding site for thiamine diphosphate. K(+) contacts are provided by isoleucine 113, alanine 161, isoleucine 162, and asparagine 166.

In terms of assembly, heterodimer of an alpha and a beta chain. Thiamine diphosphate serves as cofactor.

It localises to the plastid. The protein resides in the chloroplast. The enzyme catalyses N(6)-[(R)-lipoyl]-L-lysyl-[protein] + pyruvate + H(+) = N(6)-[(R)-S(8)-acetyldihydrolipoyl]-L-lysyl-[protein] + CO2. Its function is as follows. The pyruvate dehydrogenase complex catalyzes the overall conversion of pyruvate to acetyl-CoA and CO(2). It contains multiple copies of three enzymatic components: pyruvate dehydrogenase (E1), dihydrolipoamide acetyltransferase (E2) and lipoamide dehydrogenase (E3). In Chaetosphaeridium globosum (Charophycean green alga), this protein is Pyruvate dehydrogenase E1 component subunit beta (pdhB).